The sequence spans 577 residues: Isocitrate dehydrogenase kinase/phosphatase (577 aa).

Residues 315 to 321 (APGIRGM) and K336 contribute to the ATP site. Residue D371 is part of the active site.

The protein belongs to the AceK family.

Its subcellular location is the cytoplasm. The enzyme catalyses L-seryl-[isocitrate dehydrogenase] + ATP = O-phospho-L-seryl-[isocitrate dehydrogenase] + ADP + H(+). In terms of biological role, bifunctional enzyme which can phosphorylate or dephosphorylate isocitrate dehydrogenase (IDH) on a specific serine residue. This is a regulatory mechanism which enables bacteria to bypass the Krebs cycle via the glyoxylate shunt in response to the source of carbon. When bacteria are grown on glucose, IDH is fully active and unphosphorylated, but when grown on acetate or ethanol, the activity of IDH declines drastically concomitant with its phosphorylation. The sequence is that of Isocitrate dehydrogenase kinase/phosphatase from Escherichia fergusonii (strain ATCC 35469 / DSM 13698 / CCUG 18766 / IAM 14443 / JCM 21226 / LMG 7866 / NBRC 102419 / NCTC 12128 / CDC 0568-73).